The sequence spans 385 residues: tRNA-specific 2-thiouridylase MnmA (385 aa).

ATP is bound by residues 29 to 36 and leucine 55; that span reads GLSGGVDS. Cysteine 116 functions as the Nucleophile in the catalytic mechanism. Cysteine 116 and cysteine 225 are joined by a disulfide. Residue glycine 141 coordinates ATP. Residues 175–177 are interaction with tRNA; sequence KDQ. The Cysteine persulfide intermediate role is filled by cysteine 225. The interval 330-331 is interaction with tRNA; the sequence is RY.

It belongs to the MnmA/TRMU family.

It is found in the cytoplasm. It catalyses the reaction S-sulfanyl-L-cysteinyl-[protein] + uridine(34) in tRNA + AH2 + ATP = 2-thiouridine(34) in tRNA + L-cysteinyl-[protein] + A + AMP + diphosphate + H(+). In terms of biological role, catalyzes the 2-thiolation of uridine at the wobble position (U34) of tRNA, leading to the formation of s(2)U34. The chain is tRNA-specific 2-thiouridylase MnmA from Prochlorococcus marinus (strain MIT 9301).